A 451-amino-acid chain; its full sequence is UPF0210 protein CA_C0479 (451 aa).

This sequence belongs to the UPF0210 family. In terms of assembly, homodimer.

This Clostridium acetobutylicum (strain ATCC 824 / DSM 792 / JCM 1419 / IAM 19013 / LMG 5710 / NBRC 13948 / NRRL B-527 / VKM B-1787 / 2291 / W) protein is UPF0210 protein CA_C0479.